The primary structure comprises 62 residues: MAKVCEICGKGVVYGHQISHSNIHTKRKWLPNLQRVRAVVNGTRRRITVCTTCLKSGKVQRA.

This sequence belongs to the bacterial ribosomal protein bL28 family.

This Carboxydothermus hydrogenoformans (strain ATCC BAA-161 / DSM 6008 / Z-2901) protein is Large ribosomal subunit protein bL28.